The primary structure comprises 265 residues: MSESLSVLLTNDDGIDAVGIQALYQAFDDIAEVTVVAPTDDQSAVGRQLSSDVTIHEHDWGYGIDGTPADCVVAGVEALCPDVDLVIAGCNKGANIGAYVLGRSGTVSAAVESTFFDVPAMAVSMYIPGGGDTPWHKQATEVSAFADASRAATYLARHAFDAGVFEQADYLNINAPVAANEPATLEVTRPSRVYDMTAEHDGNGTVTLHDRVWERMRTDDIPDPSGTDRRAVVDGHISVSPLAAPHTTEHHEALDALASTYLDSI.

Residues Asp12, Asp13, Ser43, and Asn91 each coordinate a divalent metal cation.

It belongs to the SurE nucleotidase family. It depends on a divalent metal cation as a cofactor.

It localises to the cytoplasm. The catalysed reaction is a ribonucleoside 5'-phosphate + H2O = a ribonucleoside + phosphate. Its function is as follows. Nucleotidase that shows phosphatase activity on nucleoside 5'-monophosphates. In Haloquadratum walsbyi (strain DSM 16790 / HBSQ001), this protein is 5'-nucleotidase SurE.